Here is a 163-residue protein sequence, read N- to C-terminus: Large ribosomal subunit protein uL15 (163 aa).

This sequence belongs to the universal ribosomal protein uL15 family. As to quaternary structure, part of the 50S ribosomal subunit.

Binds to the 23S rRNA. This chain is Large ribosomal subunit protein uL15, found in Orientia tsutsugamushi (strain Ikeda) (Rickettsia tsutsugamushi).